The chain runs to 166 residues: Endoribonuclease YbeY (166 aa).

Residues His125, His129, and His135 each contribute to the Zn(2+) site.

Belongs to the endoribonuclease YbeY family. The cofactor is Zn(2+).

It localises to the cytoplasm. Functionally, single strand-specific metallo-endoribonuclease involved in late-stage 70S ribosome quality control and in maturation of the 3' terminus of the 16S rRNA. This chain is Endoribonuclease YbeY, found in Alkalilimnicola ehrlichii (strain ATCC BAA-1101 / DSM 17681 / MLHE-1).